Reading from the N-terminus, the 399-residue chain is Glycerol-1-phosphate dehydrogenase [NAD(P)+] (399 aa).

NAD(+)-binding positions include D56, 118–122, and 140–143; these read GTIHD and TAPS. D145 lines the substrate pocket. S149 provides a ligand contact to NAD(+). D192 provides a ligand contact to substrate. Residues D192 and H272 each contribute to the Ni(2+) site. Position 276 (H276) interacts with substrate. H292 contributes to the Ni(2+) binding site.

It belongs to the glycerol-1-phosphate dehydrogenase family. In terms of assembly, homodimer. The cofactor is Ni(2+).

The protein localises to the cytoplasm. It carries out the reaction sn-glycerol 1-phosphate + NAD(+) = dihydroxyacetone phosphate + NADH + H(+). It catalyses the reaction sn-glycerol 1-phosphate + NADP(+) = dihydroxyacetone phosphate + NADPH + H(+). Catalyzes the NAD(P)H-dependent reduction of dihydroxyacetonephosphate (DHAP or glycerone phosphate) to glycerol 1-phosphate (G1P). The G1P thus generated is probably used for the synthesis of phosphoglycerolipids in Gram-positive bacterial species. The sequence is that of Glycerol-1-phosphate dehydrogenase [NAD(P)+] from Halalkalibacterium halodurans (strain ATCC BAA-125 / DSM 18197 / FERM 7344 / JCM 9153 / C-125) (Bacillus halodurans).